Here is a 701-residue protein sequence, read N- to C-terminus: Elongation factor G (701 aa).

In terms of domain architecture, tr-type G spans 8–291; sequence SRYRNIGIVA…AVIDYLPAPI (284 aa). Residues 17 to 24, 89 to 93, and 143 to 146 contribute to the GTP site; these read AHVDAGKT, DTPGH, and NKMD.

It belongs to the TRAFAC class translation factor GTPase superfamily. Classic translation factor GTPase family. EF-G/EF-2 subfamily.

The protein resides in the cytoplasm. Functionally, catalyzes the GTP-dependent ribosomal translocation step during translation elongation. During this step, the ribosome changes from the pre-translocational (PRE) to the post-translocational (POST) state as the newly formed A-site-bound peptidyl-tRNA and P-site-bound deacylated tRNA move to the P and E sites, respectively. Catalyzes the coordinated movement of the two tRNA molecules, the mRNA and conformational changes in the ribosome. The chain is Elongation factor G from Pseudomonas syringae pv. tomato (strain ATCC BAA-871 / DC3000).